The primary structure comprises 235 residues: UPF0173 metal-dependent hydrolase mll0680 (235 aa).

It belongs to the UPF0173 family.

This Mesorhizobium japonicum (strain LMG 29417 / CECT 9101 / MAFF 303099) (Mesorhizobium loti (strain MAFF 303099)) protein is UPF0173 metal-dependent hydrolase mll0680.